Here is a 104-residue protein sequence, read N- to C-terminus: Phosphoribosyl-ATP pyrophosphatase (104 aa).

This sequence belongs to the PRA-PH family.

The protein localises to the cytoplasm. It catalyses the reaction 1-(5-phospho-beta-D-ribosyl)-ATP + H2O = 1-(5-phospho-beta-D-ribosyl)-5'-AMP + diphosphate + H(+). It participates in amino-acid biosynthesis; L-histidine biosynthesis; L-histidine from 5-phospho-alpha-D-ribose 1-diphosphate: step 2/9. The protein is Phosphoribosyl-ATP pyrophosphatase of Nitrosococcus oceani (strain ATCC 19707 / BCRC 17464 / JCM 30415 / NCIMB 11848 / C-107).